A 484-amino-acid chain; its full sequence is Chromosomal replication initiator protein DnaA (484 aa).

Positions 1 to 83 are domain I, interacts with DnaA modulators; it reads MQPPSQDWAS…LAWRTVWPGI (83 aa). A domain II region spans residues 83–146; it reads IAEVKVSVRN…EKKAEGEDQN (64 aa). Positions 110–146 are disordered; sequence GDQPRPLPKKPAKKKQSVPATPKSTSPEKKAEGEDQN. Residues 116–125 are compositionally biased toward basic residues; sequence LPKKPAKKKQ. A compositionally biased stretch (basic and acidic residues) spans 135–146; it reads SPEKKAEGEDQN. The domain III, AAA+ region stretch occupies residues 147 to 364; it reads QFEERYNFDN…GALNRVVAYA (218 aa). ATP-binding residues include Gly191, Gly193, Lys194, and Thr195. Positions 365–484 are domain IV, binds dsDNA; it reads TLSNRPINMD…VRLLMRQFEG (120 aa).

Belongs to the DnaA family. Oligomerizes as a right-handed, spiral filament on DNA at oriC.

The protein resides in the cytoplasm. Its function is as follows. Plays an essential role in the initiation and regulation of chromosomal replication. ATP-DnaA binds to the origin of replication (oriC) to initiate formation of the DNA replication initiation complex once per cell cycle. Binds the DnaA box (a 9 base pair repeat at the origin) and separates the double-stranded (ds)DNA. Forms a right-handed helical filament on oriC DNA; dsDNA binds to the exterior of the filament while single-stranded (ss)DNA is stabiized in the filament's interior. The ATP-DnaA-oriC complex binds and stabilizes one strand of the AT-rich DNA unwinding element (DUE), permitting loading of DNA polymerase. After initiation quickly degrades to an ADP-DnaA complex that is not apt for DNA replication. Binds acidic phospholipids. The chain is Chromosomal replication initiator protein DnaA from Zymomonas mobilis subsp. mobilis (strain ATCC 31821 / ZM4 / CP4).